The primary structure comprises 717 residues: Proline-rich receptor-like protein kinase PERK2 (717 aa).

Residues methionine 1 to serine 197 show a composition bias toward pro residues. Residues methionine 1–lysine 221 are disordered. The Extracellular portion of the chain corresponds to methionine 1–methionine 228. Residues proline 198 to serine 220 are compositionally biased toward low complexity. The helical transmembrane segment at valine 229 to leucine 249 threads the bilayer. Residues cysteine 250–glycine 717 lie on the Cytoplasmic side of the membrane. Residues asparagine 258–valine 323 form a disordered region. Pro residues predominate over residues valine 289–proline 303. The span at serine 307 to serine 322 shows a compositional bias: low complexity. The region spanning phenylalanine 354–isoleucine 631 is the Protein kinase domain. ATP is bound by residues leucine 360–valine 368 and lysine 382. The Proton acceptor role is filled by aspartate 478. Polar residues-rich tracts occupy residues serine 632–histidine 644 and serine 692–alanine 705. 2 disordered regions span residues serine 632–glycine 665 and tyrosine 690–glycine 717.

It belongs to the protein kinase superfamily. Ser/Thr protein kinase family. As to expression, mostly expressed in inflorescence bolt, flower buds and siliques, and, to a lower extent, in roots, seedlings and leaves.

It is found in the cell membrane. The enzyme catalyses L-seryl-[protein] + ATP = O-phospho-L-seryl-[protein] + ADP + H(+). The catalysed reaction is L-threonyl-[protein] + ATP = O-phospho-L-threonyl-[protein] + ADP + H(+). The chain is Proline-rich receptor-like protein kinase PERK2 (PERK2) from Arabidopsis thaliana (Mouse-ear cress).